Here is a 174-residue protein sequence, read N- to C-terminus: Large ribosomal subunit protein uL6 (174 aa).

This sequence belongs to the universal ribosomal protein uL6 family. As to quaternary structure, part of the 50S ribosomal subunit.

Its function is as follows. This protein binds to the 23S rRNA, and is important in its secondary structure. It is located near the subunit interface in the base of the L7/L12 stalk, and near the tRNA binding site of the peptidyltransferase center. This Stenotrophomonas maltophilia (strain R551-3) protein is Large ribosomal subunit protein uL6.